Here is a 145-residue protein sequence, read N- to C-terminus: Bacilliredoxin SERP1006 (145 aa).

Belongs to the bacilliredoxin family.

This is Bacilliredoxin SERP1006 from Staphylococcus epidermidis (strain ATCC 35984 / DSM 28319 / BCRC 17069 / CCUG 31568 / BM 3577 / RP62A).